The sequence spans 312 residues: MNYEGHLKGHRGWVTSLACPQQAGSYIKVVSTSRDGTVISWKANPDRHSVDSDYGLPNHRLEGHTGFVSCVSLAHATDYALTASWDRSIRMWDLRNGQCQRKFLKHTKDVLAVAFSPDDRLIVSAGRDNVIRVWNVAGECMHEFLRDGHEDWVSSICFSPSLEHPIVVSGSWDNTIKVWNVNGGKCERTLKGHSNYVSTVTVSPDGSLCASGGKDGAALLWDLSTGEQLFKINVESPINQIGFSPNRFWMCVATERSLSVYDLESKAVIAELTPDGAKPSECISIAWSADGNTLYSGHKDNLIRVWSISDAE.

WD repeat units lie at residues 9–42 (GHRG…ISWK), 63–93 (GHTG…RMWD), 105–135 (KHTK…RVWN), 148–180 (GHED…KVWN), 192–222 (GHSN…LLWD), 233–262 (NVES…SVYD), and 279–307 (PSEC…RVWS).

The protein belongs to the WD repeat G protein beta family. Ribosomal protein RACK1 subfamily.

The protein is Small ribosomal subunit protein RACK1 of Leishmania major.